Consider the following 295-residue polypeptide: tRNA(Ile)-lysidine synthase (295 aa).

Position 10-15 (10-15 (SGGPDS)) interacts with ATP.

This sequence belongs to the tRNA(Ile)-lysidine synthase family.

The protein localises to the cytoplasm. It catalyses the reaction cytidine(34) in tRNA(Ile2) + L-lysine + ATP = lysidine(34) in tRNA(Ile2) + AMP + diphosphate + H(+). Its function is as follows. Ligates lysine onto the cytidine present at position 34 of the AUA codon-specific tRNA(Ile) that contains the anticodon CAU, in an ATP-dependent manner. Cytidine is converted to lysidine, thus changing the amino acid specificity of the tRNA from methionine to isoleucine. The sequence is that of tRNA(Ile)-lysidine synthase from Malacoplasma penetrans (strain HF-2) (Mycoplasma penetrans).